We begin with the raw amino-acid sequence, 379 residues long: MSHDTTPPLPATGAWREGDPPGDRRWVELSEPLPLETGGELPGVRLAYETWGSLNEDRSNAVLVLHALTGDSHVVGPEGPGHPSPGWWEGIIGPGLALDTDRYFVVAPNVLGGCQGSTGPSSTAPDGRPWGSRFPRITIRDTVRAEFALLREFGIHSWAAVLGGSMGGMRALEWAATYPERVRRLLLLASPAASSAQQIAWAAPQLHAIRSDPYWHGGDYYDRPGPGPVTGMGIARRIAHITYRGATEFDERFGRNPQDGEDPMAGGRFAVESYLDHHAVKLARRFDAGSYVVLTQAMNTHDVGRGRGGVAQALRRVTARTMVAGVSSDFLYPLAQQQELADGIPGADEVRVIESASGHDGFLTEINQVSVLIKELLAQ.

A disordered region spans residues 1–24; it reads MSHDTTPPLPATGAWREGDPPGDR. The 306-residue stretch at 60-365 folds into the AB hydrolase-1 domain; that stretch reads NAVLVLHALT…ASGHDGFLTE (306 aa). S165 (nucleophile) is an active-site residue. R236 lines the substrate pocket. Catalysis depends on residues D329 and H359. D360 contacts substrate.

The protein belongs to the AB hydrolase superfamily. MetX family. Homodimer.

The protein localises to the cytoplasm. It catalyses the reaction L-homoserine + acetyl-CoA = O-acetyl-L-homoserine + CoA. It functions in the pathway amino-acid biosynthesis; L-methionine biosynthesis via de novo pathway; O-acetyl-L-homoserine from L-homoserine: step 1/1. Its function is as follows. Transfers an acetyl group from acetyl-CoA to L-homoserine, forming acetyl-L-homoserine. In Thermobifida fusca (strain YX), this protein is Homoserine O-acetyltransferase.